A 324-amino-acid polypeptide reads, in one-letter code: Testisin (324 aa).

A signal peptide spans 1–21 (MGARGKTLVPLLVVVATAAMA). Positions 22-54 (LQSTYLQVDPEKPELQEPDLLSGPCGHRTIPSR) are excised as a propeptide. Cystine bridges form between C46–C167 and C80–C96. One can recognise a Peptidase S1 domain in the interval 55 to 296 (IVGGDDAELG…HYNWIQSTMI (242 aa)). Active-site charge relay system residues include H95 and D147. 3 N-linked (GlcNAc...) asparagine glycosylation sites follow: N170, N177, and N210. 3 disulfide bridges follow: C181/C254, C214/C233, and C244/C272. Catalysis depends on S248, which acts as the Charge relay system. A glycan (N-linked (GlcNAc...) asparagine) is linked at N283. Residue N298 is the site of GPI-anchor amidated asparagine attachment. Positions 299–324 (GLLRPDPVPLLLFLTLAWASSLLRPA) are cleaved as a propeptide — removed in mature form.

Belongs to the peptidase S1 family. As to expression, testis.

It localises to the cell membrane. Its function is as follows. Could regulate proteolytic events associated with testicular germ cell maturation. This is Testisin (Prss21) from Mus musculus (Mouse).